A 380-amino-acid chain; its full sequence is MATRIDYYESLEVSRTASQDELKKAFRKQAMRYHPDRNPGDDAAEQKFKEINEAYDVLKDEQKRAAYDRYGHDAFEGGMGGMGGGFGGGFAGAGGLGDIFDQMFGDMMGGRRDGGRRTGADVQVQVEITLMEAFTGVTKDVEVRTRVTCEACHGSGSADPKAGSSTCPTCHGAGKVRAQQGFFLVERPCPTCHGSGRTVANPCKVCHGTGTEAKTETISIDIPAGVEDGTRIRMAGKGEAGGEGVQPGDLYVHISVLSHDIFQRDGANIYCRVPLRMTQAALGTEVEVPVVDGGRSKVRIPAGTQTGETFRLRGKGFSVLRSSARGDMYIQVSVETPSHLTKRQRELLEEFEKEAGDDHAKGSPENSGFFAKVRDFFEGR.

The 66-residue stretch at 6–71 folds into the J domain; that stretch reads DYYESLEVSR…QKRAAYDRYG (66 aa). Residues 136–215 form a CR-type zinc finger; that stretch reads GVTKDVEVRT…CHGTGTEAKT (80 aa). Zn(2+) is bound by residues C149, C152, C167, C170, C189, C192, C203, and C206. CXXCXGXG motif repeat units follow at residues 149-156, 167-174, 189-196, and 203-210; these read CEACHGSG, CPTCHGAG, CPTCHGSG, and CKVCHGTG.

This sequence belongs to the DnaJ family. Homodimer. Requires Zn(2+) as cofactor.

The protein resides in the cytoplasm. Participates actively in the response to hyperosmotic and heat shock by preventing the aggregation of stress-denatured proteins and by disaggregating proteins, also in an autonomous, DnaK-independent fashion. Unfolded proteins bind initially to DnaJ; upon interaction with the DnaJ-bound protein, DnaK hydrolyzes its bound ATP, resulting in the formation of a stable complex. GrpE releases ADP from DnaK; ATP binding to DnaK triggers the release of the substrate protein, thus completing the reaction cycle. Several rounds of ATP-dependent interactions between DnaJ, DnaK and GrpE are required for fully efficient folding. Also involved, together with DnaK and GrpE, in the DNA replication of plasmids through activation of initiation proteins. The protein is Chaperone protein DnaJ of Gluconobacter oxydans (strain 621H) (Gluconobacter suboxydans).